The chain runs to 419 residues: Voltage-gated potassium channel subunit beta-1 (419 aa).

Positions methionine 1–glycine 51 are disordered. Over residues serine 30 to lysine 43 the composition is skewed to basic and acidic residues. Positions 108, 109, 115, and 137 each coordinate NADP(+). Tyrosine 142 acts as the Proton donor/acceptor in catalysis. Residues asparagine 210, serine 240, arginine 241, glutamine 266, tryptophan 295, serine 296, proline 297, leucine 298, alanine 299, cysteine 300, lysine 306, arginine 316, glycine 375, serine 377, glutamine 381, glutamate 384, and asparagine 385 each coordinate NADP(+).

The protein belongs to the shaker potassium channel beta subunit family. In terms of assembly, homotetramer. Interaction with tetrameric potassium channel alpha subunits gives rise to a heterooctamer. Identified in potassium channel complexes containing KCNA1, KCNA2, KCNA4, KCNA5, KCNA6, KCNAB1 and KCNAB2. Part of a complex containing KCNA1, KCNA4 and LGI1; interaction with LGI1 inhibits down-regulation of KCNA1 channel activity. Interacts with the dimer formed by GNB1 and GNG2; this enhances KCNA1 binding. Interacts with SQSTM1. In terms of tissue distribution, detected in portal vein myocytes (at protein level).

It localises to the cytoplasm. The protein localises to the membrane. Its subcellular location is the cell membrane. The catalysed reaction is a primary alcohol + NADP(+) = an aldehyde + NADPH + H(+). It carries out the reaction a secondary alcohol + NADP(+) = a ketone + NADPH + H(+). Regulatory subunit of the voltage-gated potassium (Kv) channels composed of pore-forming and potassium-conducting alpha subunits and of regulatory beta subunits. The beta-1/KCNAB1 cytoplasmic subunit mediates closure of delayed rectifier potassium channels by physically obstructing the pore via its N-terminal domain and increases the speed of channel closure for other family members. Promotes the inactivation of KCNA1, KCNA2, KCNA4, KCNA5 and KCNA6 alpha subunit-containing channels. Displays nicotinamide adenine dinucleotide phosphate (NADPH)-dependent aldoketoreductase activity by catalyzing the NADPH-dependent reduction of a variety of endogenous aldehydes and ketones. The binding of NADPH is required for efficient down-regulation of potassium channel activity. Oxidation of the bound NADPH restrains N-terminal domain from blocking the channel, thereby decreasing N-type inactivation of potassium channel activity. The sequence is that of Voltage-gated potassium channel subunit beta-1 (KCNAB1) from Oryctolagus cuniculus (Rabbit).